A 200-amino-acid chain; its full sequence is LHFPL tetraspan subfamily member 6 protein (200 aa).

Positions 1–21 (MASSLTCAGVIWALLSFLCAA) are cleaved as a signal peptide. 2 helical membrane-spanning segments follow: residues 84 to 104 (ICTV…LTAI) and 123 to 143 (GIQF…PLGW). Asn154 carries N-linked (GlcNAc...) asparagine glycosylation. A helical membrane pass occupies residues 172-192 (CTGAGAAAAMVLCTWMACFAG).

This sequence belongs to the LHFP family.

Its subcellular location is the membrane. The protein is LHFPL tetraspan subfamily member 6 protein of Danio rerio (Zebrafish).